A 961-amino-acid chain; its full sequence is Ras-interacting protein 1 (961 aa).

Residues 1–10 (MLSGERKEGG) show a composition bias toward basic and acidic residues. 3 disordered regions span residues 1–21 (MLSG…HLPV), 35–70 (LGRR…PHVE), and 96–116 (RGSG…QRWA). Over residues 41-57 (SAASVKSSSSDTGSRSS) the composition is skewed to low complexity. Positions 59–68 (PLPPPPPPPH) are enriched in pro residues. Arginine 96 carries the post-translational modification Omega-N-methylarginine. Residues 98–110 (SGAGGAGGPGTPG) are compositionally biased toward gly residues. A Ras-associating domain is found at 141–253 (PPGVLKIFAS…RRFELRGREE (113 aa)). The interval 261–352 (AFGAADADGT…MAPGAADAQM (92 aa)) is disordered. Phosphoserine is present on residues serine 274 and serine 286. Residues 284–295 (AASGGAALASPG) show a composition bias toward low complexity. The span at 296–307 (PGSGSGTPTGSG) shows a compositional bias: gly residues. Residues 314–327 (NLSLRRSVSELSLQ) are compositionally biased toward low complexity. Residues serine 320, serine 322, serine 325, and serine 413 each carry the phosphoserine modification. The Dilute domain occupies 594–895 (GRLARLIKEA…PPAERDAVDT (302 aa)).

As to quaternary structure, interacts with Ras family members that have been activated by GTP binding. Interacts with HRAS, RAP1A, RAP2, RRAS, RAF1 and RRAS2. Interacts with MYH9 and ARHGAP29. In terms of tissue distribution, detected in kidney, heart, skeletal muscle, small intestine and lung.

It localises to the cytoplasm. It is found in the perinuclear region. Its subcellular location is the golgi apparatus. The protein localises to the golgi stack. Functionally, required for the proper formation of vascular structures that develop via both vasculogenesis and angiogenesis. Acts as a critical and vascular-specific regulator of GTPase signaling, cell architecture, and adhesion, which is essential for endothelial cell morphogenesis and blood vessel tubulogenesis. Regulates the activity of Rho GTPases in part by recruiting ARHGAP29 and suppressing RhoA signaling and dampening ROCK and MYH9 activities in endothelial cells. May act as effector for Golgi-bound HRAS and other Ras-like proteins. May promote HRAS-mediated transformation. Negative regulator of amino acid starvation-induced autophagy. In Mus musculus (Mouse), this protein is Ras-interacting protein 1 (Rasip1).